The chain runs to 208 residues: Ypt/Rab-type GTPase ypt71 (208 aa).

GTP contacts are provided by residues 17–23, 33–40, glycine 66, 124–127, and 158–160; these read SGVGKTC, FSREYKAT, NQID, and SAK. An Effector region motif is present at residues 37 to 45; sequence YKATIGADF. Residues cysteine 206 and cysteine 208 are each lipidated (S-geranylgeranyl cysteine). Cysteine methyl ester is present on cysteine 208.

It belongs to the small GTPase superfamily. Rab family.

It is found in the vacuole membrane. Rab activation is generally mediated by a guanine exchange factor (GEF), while inactivation through hydrolysis of bound GTP is catalyzed by a GTPase activating protein (GAP). In terms of biological role, ypt/Rab-type GTPases are key regulators of membrane trafficking and intracellular vesicular transport. They act as molecular switches that convert between GTP-bound and GDP-bound states, and regulate virtually all steps of membrane traffic from the formation of the transport vesicle at the donor membrane to its fusion at the target membrane. In the GDP-bound state, Ypt proteins are predominantly cytosolic, solubilized through the interaction with a GDP dissociation inhibitor (GDI). In the GTP-bound state, the proteins are membrane bound and interact with specific effector proteins that select cargo, promote vesicle movement, or verify the correct site of fusion. Act antagonistically to ypt7 in regulating vacuolar morphology, promoting vacuolar fission. The protein is Ypt/Rab-type GTPase ypt71 (ypt71) of Schizosaccharomyces pombe (strain 972 / ATCC 24843) (Fission yeast).